Here is a 165-residue protein sequence, read N- to C-terminus: Neurotrophin-3 (165 aa).

The N-terminal stretch at 1–3 is a signal peptide; sequence IQS. Residues 4 to 119 constitute a propeptide that is removed on maturation; it reads TSMDQGSLSE…VLNRTSRRKR (116 aa). Residues 32-61 form a disordered region; sequence KVPKQAARTKDGTQTTAKKTEAEPEATANK. Asn-112 carries an N-linked (GlcNAc...) asparagine glycan.

The protein belongs to the NGF-beta family.

Its subcellular location is the secreted. Functionally, seems to promote the survival of visceral and proprioceptive sensory neurons. This chain is Neurotrophin-3 (NTF3), found in Xenopeltis unicolor (Sunbeam snake).